The primary structure comprises 150 residues: Cytochrome c-type biogenesis protein CcmE (150 aa).

Residues 1–7 lie on the Cytoplasmic side of the membrane; sequence MTRKQKR. A helical; Signal-anchor for type II membrane protein membrane pass occupies residues 8 to 28; it reads LAIIGGGVGFLTAAVLLVMFA. Topologically, residues 29 to 150 are periplasmic; that stretch reads FSQAVAYFYV…VTLGGKENIQ (122 aa). Heme contacts are provided by His123 and Tyr127.

Belongs to the CcmE/CycJ family.

Its subcellular location is the cell inner membrane. In terms of biological role, heme chaperone required for the biogenesis of c-type cytochromes. Transiently binds heme delivered by CcmC and transfers the heme to apo-cytochromes in a process facilitated by CcmF and CcmH. The polypeptide is Cytochrome c-type biogenesis protein CcmE (Sinorhizobium fredii (strain NBRC 101917 / NGR234)).